The primary structure comprises 75 residues: Large ribosomal subunit protein bL31 (75 aa).

Belongs to the bacterial ribosomal protein bL31 family. Type A subfamily. As to quaternary structure, part of the 50S ribosomal subunit.

Its function is as follows. Binds the 23S rRNA. In Chlorobium limicola (strain DSM 245 / NBRC 103803 / 6330), this protein is Large ribosomal subunit protein bL31.